A 354-amino-acid polypeptide reads, in one-letter code: Mitogen-activated protein kinase kinase 1 (354 aa).

Residues 68 to 328 form the Protein kinase domain; that stretch reads LEVIKVIGKG…AKELLEHKFV (261 aa). ATP is bound by residues 74-82 and Lys97; that span reads IGKGSSGNV. Residue Asp190 is the Proton acceptor of the active site. A Phosphothreonine modification is found at Thr218. Ser224 is modified (phosphoserine). Position 228 is a phosphothreonine (Thr228).

It belongs to the protein kinase superfamily. STE Ser/Thr protein kinase family. MAP kinase kinase subfamily. In terms of assembly, interacts with MEKK1 and MPK4. May form a ternary complex composed of MEKK1 and MKK1/MKK2 and MPK4. Interacts with P.syringae type III effector HopF2. Interacts with MPK11. In terms of processing, phosphorylation at Thr-218 and Ser-224 by MAP kinase kinase kinases positively regulates kinase activity. Expressed in roots, stem, flowers and siliques.

It carries out the reaction L-seryl-[protein] + ATP = O-phospho-L-seryl-[protein] + ADP + H(+). It catalyses the reaction L-threonyl-[protein] + ATP = O-phospho-L-threonyl-[protein] + ADP + H(+). The enzyme catalyses L-tyrosyl-[protein] + ATP = O-phospho-L-tyrosyl-[protein] + ADP + H(+). With respect to regulation, activated through serine and threonine phosphorylation in response to wounding, cold, drought, salt stresses, abscisic acid (ABA), hydrogen peroxide, bacterial flagellin and laminarin beta-glucan. Functionally, MEKK1, MKK1/MKK2 and MPK4/MPK6 function in a signaling pathway that modulates the expression of genes responding to biotic and abiotic stresses and also plays an important role in pathogen defense by negatively regulating innate immunity. Activates by phosphorylation the downstream MPK4. Acts redundantly with MKK2. MKK1-MPK6 module mediates abscisic acid (ABA)-dependent CAT1 expression with H(2)O(2) production and response to drought and salt stress. MKK1-MPK6 module is also involved in sugar signaling during the process of seed germination. The polypeptide is Mitogen-activated protein kinase kinase 1 (MKK1) (Arabidopsis thaliana (Mouse-ear cress)).